Here is a 181-residue protein sequence, read N- to C-terminus: MTANVNNLIWIDLEMTGLEPDVDRIIEIATLVTDQELNIIGQGPVIAIHQPDEVLAAMDDWNQKHHGESGLIDRVRASQDNEAQAVAKTIAFLEQYVPKGASPMCGNSVGQDRRFLNRYMRELEDYFHYRNLDVSTVKELVKRWSPEIMEGFKKQNTHQALQDIQESIAELQYYRSKVFKI.

The 164-residue stretch at L8–L171 folds into the Exonuclease domain. The active site involves Y129.

This sequence belongs to the oligoribonuclease family.

It is found in the cytoplasm. Its function is as follows. 3'-to-5' exoribonuclease specific for small oligoribonucleotides. The protein is Oligoribonuclease of Shewanella putrefaciens (strain CN-32 / ATCC BAA-453).